Reading from the N-terminus, the 260-residue chain is Ribonuclease PH (260 aa).

Phosphate-binding positions include Arg87 and Gly125–Arg127. A disordered region spans residues Leu232 to Arg260. A compositionally biased stretch (gly residues) spans Ala248–Arg260.

This sequence belongs to the RNase PH family. As to quaternary structure, homohexameric ring arranged as a trimer of dimers.

It carries out the reaction tRNA(n+1) + phosphate = tRNA(n) + a ribonucleoside 5'-diphosphate. In terms of biological role, phosphorolytic 3'-5' exoribonuclease that plays an important role in tRNA 3'-end maturation. Removes nucleotide residues following the 3'-CCA terminus of tRNAs; can also add nucleotides to the ends of RNA molecules by using nucleoside diphosphates as substrates, but this may not be physiologically important. Probably plays a role in initiation of 16S rRNA degradation (leading to ribosome degradation) during starvation. This is Ribonuclease PH from Parafrankia sp. (strain EAN1pec).